Reading from the N-terminus, the 645-residue chain is Bifurcating [FeFe] hydrogenase alpha subunit (645 aa).

The 2Fe-2S ferredoxin-type domain maps to 1-76 (MKIYVDGREV…GMKVKTNTPE (76 aa)). The [2Fe-2S] cluster site is built by C34, C45, C48, and C60. The 4Fe-4S His(Cys)3-ligated-type domain occupies 76–115 (EIYEMRRNILELILATHNRDCTTCDRNGSCKLQKYAEDFG). [4Fe-4S] cluster contacts are provided by H92, C96, C99, C105, C143, C146, C149, C153, C186, C189, C192, C196, C295, C350, C482, and C486. 4Fe-4S ferredoxin-type domains lie at 133 to 164 (SAPV…VIEF) and 178 to 206 (DTPL…IRND). C486 contacts Fe(2+). [2Fe-2S] cluster contacts are provided by C575, C580, C612, and C616.

As to quaternary structure, heterotrimer composed of HydA (alpha subunit), HydB (beta subunit) and HydC (gamma subunit). Near neutral and acidic pH conditions favor oligomerization of the heterotrimeric holoenzyme. It depends on [2Fe-2S] cluster as a cofactor. Requires [4Fe-4S] cluster as cofactor. Fe(2+) serves as cofactor.

Its subcellular location is the cytoplasm. The catalysed reaction is 2 H2 + 2 oxidized [2Fe-2S]-[ferredoxin] + NAD(+) = 2 reduced [2Fe-2S]-[ferredoxin] + NADH + 3 H(+). Catalyzes the oxidation of the physiological electron carriers NADH and reduced ferredoxin, coupled to the production of H(2). Acts as a bifurcating [FeFe] hydrogenase, which uses the exergonic oxidation of reduced ferredoxin to drive the unfavorable oxidation of NADH to produce H(2). The alpha subunit contains the catalytic H-cluster. The sequence is that of Bifurcating [FeFe] hydrogenase alpha subunit from Thermotoga maritima (strain ATCC 43589 / DSM 3109 / JCM 10099 / NBRC 100826 / MSB8).